The following is a 235-amino-acid chain: 7-cyano-7-deazaguanine synthase (235 aa).

16–26 (FSGGQDSTTCL) is an ATP binding site. Positions 195, 204, 207, and 210 each coordinate Zn(2+).

This sequence belongs to the QueC family. It depends on Zn(2+) as a cofactor.

The enzyme catalyses 7-carboxy-7-deazaguanine + NH4(+) + ATP = 7-cyano-7-deazaguanine + ADP + phosphate + H2O + H(+). The protein operates within purine metabolism; 7-cyano-7-deazaguanine biosynthesis. Functionally, catalyzes the ATP-dependent conversion of 7-carboxy-7-deazaguanine (CDG) to 7-cyano-7-deazaguanine (preQ(0)). This is 7-cyano-7-deazaguanine synthase from Shewanella frigidimarina (strain NCIMB 400).